Consider the following 271-residue polypeptide: uncharacterized protein (271 aa).

This is an uncharacterized protein from Acanthamoeba polyphaga mimivirus (APMV).